Reading from the N-terminus, the 506-residue chain is Maturase K (506 aa).

This sequence belongs to the intron maturase 2 family. MatK subfamily.

The protein localises to the plastid. It localises to the chloroplast. Its function is as follows. Usually encoded in the trnK tRNA gene intron. Probably assists in splicing its own and other chloroplast group II introns. The polypeptide is Maturase K (Mimosa pudica (Sensitive plant)).